The sequence spans 262 residues: Ribosomal RNA small subunit methyltransferase A (262 aa).

Residues Ile18, Gly43, Glu65, Asp91, and Asn110 each contribute to the S-adenosyl-L-methionine site.

It belongs to the class I-like SAM-binding methyltransferase superfamily. rRNA adenine N(6)-methyltransferase family. RsmA subfamily.

The protein resides in the cytoplasm. It catalyses the reaction adenosine(1518)/adenosine(1519) in 16S rRNA + 4 S-adenosyl-L-methionine = N(6)-dimethyladenosine(1518)/N(6)-dimethyladenosine(1519) in 16S rRNA + 4 S-adenosyl-L-homocysteine + 4 H(+). In terms of biological role, specifically dimethylates two adjacent adenosines (A1518 and A1519) in the loop of a conserved hairpin near the 3'-end of 16S rRNA in the 30S particle. May play a critical role in biogenesis of 30S subunits. The chain is Ribosomal RNA small subunit methyltransferase A from Ehrlichia ruminantium (strain Gardel).